A 33-amino-acid chain; its full sequence is Brevinin-2 (33 aa).

Cysteine 27 and cysteine 33 form a disulfide bridge.

This sequence belongs to the frog skin active peptide (FSAP) family. Brevinin subfamily. Expressed by the skin glands.

The protein resides in the secreted. Its function is as follows. Shows antibacterial activity against representative Gram-negative and Gram-positive bacterial species, and a very high hemolytic activity. The chain is Brevinin-2 from Pelophylax porosus brevipodus (Nagoya Daruma pond frog).